The chain runs to 138 residues: Histone H2AX (138 aa).

A disordered region spans residues 1 to 23; the sequence is MSTTGKGGKAKGKTASSKQVSRS. Ser-2 carries the post-translational modification N-acetylserine. An N6-acetyllysine mark is found at Lys-6, Lys-9, Lys-11, Lys-13, and Lys-18. Ser-123 is modified (phosphoserine). Lys-124 is covalently cross-linked (Glycyl lysine isopeptide (Lys-Gly) (interchain with G-Cter in ubiquitin)). Phosphoserine is present on residues Ser-125, Ser-130, and Ser-135. The [ST]-Q motif motif lies at 135–136; it reads SQ.

The protein belongs to the histone H2A family. In terms of assembly, the nucleosome is a histone octamer containing two molecules each of H2A, H2B, H3 and H4 assembled in one H3-H4 heterotetramer and two H2A-H2B heterodimers. The octamer wraps approximately 147 bp of DNA. Post-translationally, monoubiquitination of Lys-124 gives a specific tag for epigenetic transcriptional repression. Acetylation occurs almost exclusively in the MAC.

It is found in the nucleus. It localises to the chromosome. Functionally, core component of nucleosome. Nucleosomes wrap and compact DNA into chromatin, limiting DNA accessibility to the cellular machineries which require DNA as a template. Histones thereby play a central role in transcription regulation, DNA repair, DNA replication and chromosomal stability. DNA accessibility is regulated via a complex set of post-translational modifications of histones, also called histone code, and nucleosome remodeling. The chain is Histone H2AX (HTA1) from Tetrahymena pyriformis.